A 507-amino-acid polypeptide reads, in one-letter code: NADH-quinone oxidoreductase subunit N (507 aa).

The next 15 helical transmembrane spans lie at 17–37, 46–66, 81–101, 113–133, 134–154, 168–188, 190–210, 211–231, 245–265, 279–299, 307–327, 334–354, 392–412, 425–445, and 478–498; these read LVTL…MLTA, VMIL…LSQG, YALF…ILCY, ALYI…ASSH, FASF…LIAY, YLIL…LVYA, LGTM…AALE, LYGL…LALV, PVPI…VLLL, ITFA…LLAL, ILAY…LAFD, VAYF…VVTV, AGVF…MGFI, SLWM…FYYM, and LAAL…LIGV.

It belongs to the complex I subunit 2 family. In terms of assembly, NDH-1 is composed of 14 different subunits. Subunits NuoA, H, J, K, L, M, N constitute the membrane sector of the complex.

The protein resides in the cell inner membrane. The enzyme catalyses a quinone + NADH + 5 H(+)(in) = a quinol + NAD(+) + 4 H(+)(out). NDH-1 shuttles electrons from NADH, via FMN and iron-sulfur (Fe-S) centers, to quinones in the respiratory chain. The immediate electron acceptor for the enzyme in this species is believed to be ubiquinone. Couples the redox reaction to proton translocation (for every two electrons transferred, four hydrogen ions are translocated across the cytoplasmic membrane), and thus conserves the redox energy in a proton gradient. This chain is NADH-quinone oxidoreductase subunit N, found in Nitrosospira multiformis (strain ATCC 25196 / NCIMB 11849 / C 71).